We begin with the raw amino-acid sequence, 271 residues long: Formamidopyrimidine-DNA glycosylase (271 aa).

The active-site Schiff-base intermediate with DNA is Pro2. Catalysis depends on Glu3, which acts as the Proton donor. Residue Lys58 is the Proton donor; for beta-elimination activity of the active site. Positions 92, 111, and 152 each coordinate DNA. The segment at 237–271 (SVYGREGEACKQCGRVLKHATIGQRATVWCGSCQR) adopts an FPG-type zinc-finger fold. The Proton donor; for delta-elimination activity role is filled by Arg261.

This sequence belongs to the FPG family. Monomer. Requires Zn(2+) as cofactor.

It carries out the reaction Hydrolysis of DNA containing ring-opened 7-methylguanine residues, releasing 2,6-diamino-4-hydroxy-5-(N-methyl)formamidopyrimidine.. The catalysed reaction is 2'-deoxyribonucleotide-(2'-deoxyribose 5'-phosphate)-2'-deoxyribonucleotide-DNA = a 3'-end 2'-deoxyribonucleotide-(2,3-dehydro-2,3-deoxyribose 5'-phosphate)-DNA + a 5'-end 5'-phospho-2'-deoxyribonucleoside-DNA + H(+). Functionally, involved in base excision repair of DNA damaged by oxidation or by mutagenic agents. Acts as a DNA glycosylase that recognizes and removes damaged bases. Has a preference for oxidized purines, such as 7,8-dihydro-8-oxoguanine (8-oxoG). Has AP (apurinic/apyrimidinic) lyase activity and introduces nicks in the DNA strand. Cleaves the DNA backbone by beta-delta elimination to generate a single-strand break at the site of the removed base with both 3'- and 5'-phosphates. The sequence is that of Formamidopyrimidine-DNA glycosylase from Xanthomonas euvesicatoria pv. vesicatoria (strain 85-10) (Xanthomonas campestris pv. vesicatoria).